The chain runs to 119 residues: Protein Wnt-4 (119 aa).

Serine 1 is lipidated: O-palmitoleoyl serine; by PORCN. 2 disulfides stabilise this stretch: cysteine 69-cysteine 100 and cysteine 85-cysteine 95. Asparagine 86 is a glycosylation site (N-linked (GlcNAc...) asparagine).

It belongs to the Wnt family. Post-translationally, palmitoleoylation is required for efficient binding to frizzled receptors. Depalmitoleoylation leads to Wnt signaling pathway inhibition.

It localises to the secreted. It is found in the extracellular space. Its subcellular location is the extracellular matrix. Ligand for members of the frizzled family of seven transmembrane receptors. Plays an important role in embryonic development. The polypeptide is Protein Wnt-4 (WNT4) (Meleagris gallopavo (Wild turkey)).